The following is a 139-amino-acid chain: Autophagy-related protein 31 (139 aa).

The protein belongs to the ATG31 family. Forms a stable complex with ATG17 and ATG29. Interacts directly with ATG29. The ATG17-ATG29-ATG31 complex interacts with the ATG1-ATG13 complex. Note=The interaction with the ATG1-ATG13 complex is induced by starvation.

The protein resides in the preautophagosomal structure. Plays a role in starvation-induced autophagy. Involved in mitophagy. Functions with ATG17 and ATG29 at the preautophagosomal structure (PAS) in order to form normal autophagosomes under starvation conditions. This chain is Autophagy-related protein 31, found in Kluyveromyces marxianus (strain DMKU3-1042 / BCC 29191 / NBRC 104275) (Yeast).